A 442-amino-acid polypeptide reads, in one-letter code: Probable alpha-galactosidase B (442 aa).

Residues 1–19 (MQRYISLSVSLSLLSGANA) form the signal peptide. 2 disulfide bridges follow: Cys42-Cys74 and Cys124-Cys154. Catalysis depends on Asp152, which acts as the Nucleophile. N-linked (GlcNAc...) asparagine glycans are attached at residues Asn159, Asn173, Asn179, and Asn215. 224–228 (EWGQA) contributes to the substrate binding site. An N-linked (GlcNAc...) asparagine glycan is attached at Asn235. Asp246 acts as the Proton donor in catalysis. Asn285 is a glycosylation site (N-linked (GlcNAc...) asparagine).

It belongs to the glycosyl hydrolase 27 family.

It localises to the secreted. The catalysed reaction is Hydrolysis of terminal, non-reducing alpha-D-galactose residues in alpha-D-galactosides, including galactose oligosaccharides, galactomannans and galactolipids.. Functionally, hydrolyzes a variety of simple alpha-D-galactoside as well as more complex molecules such as oligosaccharides and polysaccharides. This is Probable alpha-galactosidase B (aglB) from Aspergillus oryzae (strain ATCC 42149 / RIB 40) (Yellow koji mold).